Reading from the N-terminus, the 140-residue chain is uncharacterized protein (140 aa).

The HTH cro/C1-type domain maps to 26-80 (IRSQRETAHVSMRQLAERSGVSNPYLSQVERGLRKPSADVLSQIAKALRVSAEVL). The H-T-H motif DNA-binding region spans 37–56 (MRQLAERSGVSNPYLSQVER).

This is an uncharacterized protein from Mycobacterium tuberculosis (strain ATCC 25618 / H37Rv).